A 122-amino-acid polypeptide reads, in one-letter code: Small ribosomal subunit protein uS12cz/uS12cy (122 aa).

Belongs to the universal ribosomal protein uS12 family. As to quaternary structure, part of the 30S ribosomal subunit.

The protein localises to the plastid. Its subcellular location is the chloroplast. Functionally, with S4 and S5 plays an important role in translational accuracy. Located at the interface of the 30S and 50S subunits. The chain is Small ribosomal subunit protein uS12cz/uS12cy (rps12-A) from Triticum aestivum (Wheat).